Here is a 184-residue protein sequence, read N- to C-terminus: ATP synthase subunit b, chloroplastic (184 aa).

Residues 27–49 (LATNLINLSVVLGVLIFFGKGVL) form a helical membrane-spanning segment.

The protein belongs to the ATPase B chain family. As to quaternary structure, F-type ATPases have 2 components, F(1) - the catalytic core - and F(0) - the membrane proton channel. F(1) has five subunits: alpha(3), beta(3), gamma(1), delta(1), epsilon(1). F(0) has four main subunits: a(1), b(1), b'(1) and c(10-14). The alpha and beta chains form an alternating ring which encloses part of the gamma chain. F(1) is attached to F(0) by a central stalk formed by the gamma and epsilon chains, while a peripheral stalk is formed by the delta, b and b' chains.

The protein localises to the plastid. The protein resides in the chloroplast thylakoid membrane. Functionally, f(1)F(0) ATP synthase produces ATP from ADP in the presence of a proton or sodium gradient. F-type ATPases consist of two structural domains, F(1) containing the extramembraneous catalytic core and F(0) containing the membrane proton channel, linked together by a central stalk and a peripheral stalk. During catalysis, ATP synthesis in the catalytic domain of F(1) is coupled via a rotary mechanism of the central stalk subunits to proton translocation. Component of the F(0) channel, it forms part of the peripheral stalk, linking F(1) to F(0). In Liriodendron tulipifera (Tuliptree), this protein is ATP synthase subunit b, chloroplastic.